An 89-amino-acid chain; its full sequence is Large ribosomal subunit protein bL27 (89 aa).

Positions 1–22 (MAHKKAGGSSRNGRDSESKRLG) are disordered.

This sequence belongs to the bacterial ribosomal protein bL27 family.

The polypeptide is Large ribosomal subunit protein bL27 (Bartonella henselae (strain ATCC 49882 / DSM 28221 / CCUG 30454 / Houston 1) (Rochalimaea henselae)).